The chain runs to 505 residues: Maturase K (505 aa).

This sequence belongs to the intron maturase 2 family. MatK subfamily.

It localises to the plastid. Its subcellular location is the chloroplast. Its function is as follows. Usually encoded in the trnK tRNA gene intron. Probably assists in splicing its own and other chloroplast group II introns. This chain is Maturase K, found in Amaranthus greggii (Gregg's amaranth).